A 151-amino-acid chain; its full sequence is 3-hydroxyacyl-[acyl-carrier-protein] dehydratase FabZ (151 aa).

Residue H56 is part of the active site.

Belongs to the thioester dehydratase family. FabZ subfamily.

It localises to the cytoplasm. The enzyme catalyses a (3R)-hydroxyacyl-[ACP] = a (2E)-enoyl-[ACP] + H2O. Functionally, involved in unsaturated fatty acids biosynthesis. Catalyzes the dehydration of short chain beta-hydroxyacyl-ACPs and long chain saturated and unsaturated beta-hydroxyacyl-ACPs. The polypeptide is 3-hydroxyacyl-[acyl-carrier-protein] dehydratase FabZ (Rhodopseudomonas palustris (strain ATCC BAA-98 / CGA009)).